Here is a 99-residue protein sequence, read N- to C-terminus: UPF0045 protein MTH_1187 (99 aa).

The protein belongs to the UPF0045 family. Homotetramer.

The polypeptide is UPF0045 protein MTH_1187 (Methanothermobacter thermautotrophicus (strain ATCC 29096 / DSM 1053 / JCM 10044 / NBRC 100330 / Delta H) (Methanobacterium thermoautotrophicum)).